We begin with the raw amino-acid sequence, 224 residues long: Ribonuclease HII (224 aa).

Residues 7–217 (STIMGIDEAG…SNAVIADCLQ (211 aa)) form the RNase H type-2 domain. The a divalent metal cation site is built by D13, E14, and D111.

Belongs to the RNase HII family. Requires Mn(2+) as cofactor. Mg(2+) is required as a cofactor.

It is found in the cytoplasm. It catalyses the reaction Endonucleolytic cleavage to 5'-phosphomonoester.. Its function is as follows. Endonuclease that specifically degrades the RNA of RNA-DNA hybrids. This chain is Ribonuclease HII, found in Methanocella arvoryzae (strain DSM 22066 / NBRC 105507 / MRE50).